A 315-amino-acid chain; its full sequence is NAD kinase (315 aa).

D91 serves as the catalytic Proton acceptor. Residues 91-92, R96, 165-166, D195, and 206-211 each bind NAD(+); these read DG, NE, and TAYAFS.

This sequence belongs to the NAD kinase family. The cofactor is a divalent metal cation.

The protein localises to the cytoplasm. The enzyme catalyses NAD(+) + ATP = ADP + NADP(+) + H(+). Functionally, involved in the regulation of the intracellular balance of NAD and NADP, and is a key enzyme in the biosynthesis of NADP. Catalyzes specifically the phosphorylation on 2'-hydroxyl of the adenosine moiety of NAD to yield NADP. This is NAD kinase from Rhodococcus erythropolis (strain PR4 / NBRC 100887).